A 435-amino-acid chain; its full sequence is Serine--tRNA ligase (435 aa).

T241–E243 provides a ligand contact to L-serine. Residue R272–E274 participates in ATP binding. L-serine is bound at residue E295. E359–S362 is a binding site for ATP. S395 lines the L-serine pocket.

It belongs to the class-II aminoacyl-tRNA synthetase family. Type-1 seryl-tRNA synthetase subfamily. Homodimer. The tRNA molecule binds across the dimer.

It localises to the cytoplasm. It catalyses the reaction tRNA(Ser) + L-serine + ATP = L-seryl-tRNA(Ser) + AMP + diphosphate + H(+). It carries out the reaction tRNA(Sec) + L-serine + ATP = L-seryl-tRNA(Sec) + AMP + diphosphate + H(+). The protein operates within aminoacyl-tRNA biosynthesis; selenocysteinyl-tRNA(Sec) biosynthesis; L-seryl-tRNA(Sec) from L-serine and tRNA(Sec): step 1/1. In terms of biological role, catalyzes the attachment of serine to tRNA(Ser). Is also able to aminoacylate tRNA(Sec) with serine, to form the misacylated tRNA L-seryl-tRNA(Sec), which will be further converted into selenocysteinyl-tRNA(Sec). The sequence is that of Serine--tRNA ligase from Actinobacillus pleuropneumoniae serotype 5b (strain L20).